The following is a 306-amino-acid chain: Aspartate carbamoyltransferase catalytic subunit (306 aa).

Residues arginine 51 and threonine 52 each contribute to the carbamoyl phosphate site. L-aspartate is bound at residue lysine 79. The carbamoyl phosphate site is built by arginine 101, histidine 129, and glutamine 132. 2 residues coordinate L-aspartate: arginine 162 and arginine 213. Residues alanine 254 and proline 255 each contribute to the carbamoyl phosphate site.

Belongs to the aspartate/ornithine carbamoyltransferase superfamily. ATCase family. Heterododecamer (2C3:3R2) of six catalytic PyrB chains organized as two trimers (C3), and six regulatory PyrI chains organized as three dimers (R2).

The catalysed reaction is carbamoyl phosphate + L-aspartate = N-carbamoyl-L-aspartate + phosphate + H(+). It functions in the pathway pyrimidine metabolism; UMP biosynthesis via de novo pathway; (S)-dihydroorotate from bicarbonate: step 2/3. Its function is as follows. Catalyzes the condensation of carbamoyl phosphate and aspartate to form carbamoyl aspartate and inorganic phosphate, the committed step in the de novo pyrimidine nucleotide biosynthesis pathway. The chain is Aspartate carbamoyltransferase catalytic subunit from Bacillus thuringiensis (strain Al Hakam).